The sequence spans 387 residues: 3-ketoacyl-CoA thiolase (387 aa).

The active-site Acyl-thioester intermediate is the Cys91. Residues His343 and Cys373 each act as proton acceptor in the active site.

This sequence belongs to the thiolase-like superfamily. Thiolase family. As to quaternary structure, heterotetramer of two alpha chains (FadB) and two beta chains (FadA).

The protein resides in the cytoplasm. The enzyme catalyses an acyl-CoA + acetyl-CoA = a 3-oxoacyl-CoA + CoA. The protein operates within lipid metabolism; fatty acid beta-oxidation. In terms of biological role, catalyzes the final step of fatty acid oxidation in which acetyl-CoA is released and the CoA ester of a fatty acid two carbons shorter is formed. This chain is 3-ketoacyl-CoA thiolase, found in Shewanella denitrificans (strain OS217 / ATCC BAA-1090 / DSM 15013).